The following is a 170-amino-acid chain: MSNYSQLLQNATWQPSTDMQLPLSISSWLELSTSLTTQLKQAFGEVNVCVLAESWITTLNENERQFFPKQACPCWCREVILKSQDIPLIFARTLIPASLLTQHSELQQLGNRALGEWLFMQSDRIRQKLELTHDKNTALYARRALMSIGAENMMVAELFLTPQIFTRVVK.

Substrate contacts are provided by arginine 77, leucine 114, and glutamate 157.

Belongs to the UbiC family.

Its subcellular location is the cytoplasm. It catalyses the reaction chorismate = 4-hydroxybenzoate + pyruvate. Its pathway is cofactor biosynthesis; ubiquinone biosynthesis. Removes the pyruvyl group from chorismate, with concomitant aromatization of the ring, to provide 4-hydroxybenzoate (4HB) for the ubiquinone pathway. This Pasteurella multocida (strain Pm70) protein is Probable chorismate pyruvate-lyase.